We begin with the raw amino-acid sequence, 432 residues long: NADH-quinone oxidoreductase subunit D (432 aa).

The protein belongs to the complex I 49 kDa subunit family. In terms of assembly, NDH-1 is composed of 14 different subunits. Subunits NuoB, C, D, E, F, and G constitute the peripheral sector of the complex.

Its subcellular location is the cell membrane. The enzyme catalyses a quinone + NADH + 5 H(+)(in) = a quinol + NAD(+) + 4 H(+)(out). In terms of biological role, NDH-1 shuttles electrons from NADH, via FMN and iron-sulfur (Fe-S) centers, to quinones in the respiratory chain. The immediate electron acceptor for the enzyme in this species is believed to be a menaquinone. Couples the redox reaction to proton translocation (for every two electrons transferred, four hydrogen ions are translocated across the cytoplasmic membrane), and thus conserves the redox energy in a proton gradient. The polypeptide is NADH-quinone oxidoreductase subunit D (Mycobacterium marinum (strain ATCC BAA-535 / M)).